Here is a 57-residue protein sequence, read N- to C-terminus: NADH dehydrogenase [ubiquinone] 1 beta subcomplex subunit 1 (57 aa).

The helical transmembrane segment at 10–26 (HWVHILVPAGFVFGCYL) threads the bilayer.

Belongs to the complex I NDUFB1 subunit family. Complex I is composed of 45 different subunits.

The protein localises to the mitochondrion inner membrane. Its function is as follows. Accessory subunit of the mitochondrial membrane respiratory chain NADH dehydrogenase (Complex I) that is believed not to be involved in catalysis. Complex I functions in the transfer of electrons from NADH to the respiratory chain. The immediate electron acceptor for the enzyme is believed to be ubiquinone. This is NADH dehydrogenase [ubiquinone] 1 beta subcomplex subunit 1 (Ndufb1) from Mus musculus (Mouse).